A 329-amino-acid chain; its full sequence is Quinone oxidoreductase (329 aa).

An N-acetylalanine modification is found at Ala2. Lys23 carries the N6-acetyllysine modification. Residues Tyr53, 158 to 161, Gly181, His200, Asn229, 246 to 249, and 269 to 271 each bind NADP(+); these read SGGV, VGSR, and VAL. Position 248 is a phosphoserine (Ser248).

The protein belongs to the zinc-containing alcohol dehydrogenase family. Quinone oxidoreductase subfamily. As to quaternary structure, homotetramer.

It is found in the cytoplasm. The catalysed reaction is 2 a quinone + NADPH + H(+) = 2 a 1,4-benzosemiquinone + NADP(+). In terms of biological role, does not have alcohol dehydrogenase activity. Binds NADP and acts through a one-electron transfer process. Orthoquinones, such as 1,2-naphthoquinone or 9,10-phenanthrenequinone, are the best substrates (in vitro). May act in the detoxification of xenobiotics. Interacts with (AU)-rich elements (ARE) in the 3'-UTR of target mRNA species and enhances their stability. NADPH binding interferes with mRNA binding. In Sus scrofa (Pig), this protein is Quinone oxidoreductase (CRYZ).